The chain runs to 247 residues: Putative urease accessory protein UreD homolog (247 aa).

Belongs to the UreD family. As to quaternary structure, ureD, UreF and UreG form a complex that acts as a GTP-hydrolysis-dependent molecular chaperone, activating the urease apoprotein by helping to assemble the nickel containing metallocenter of UreC. The UreE protein probably delivers the nickel.

It localises to the cytoplasm. Functionally, required for maturation of urease via the functional incorporation of the urease nickel metallocenter. This chain is Putative urease accessory protein UreD homolog, found in Escherichia coli O157:H7.